A 185-amino-acid polypeptide reads, in one-letter code: UPF0301 protein MS0260 (185 aa).

This sequence belongs to the UPF0301 (AlgH) family.

This is UPF0301 protein MS0260 from Mannheimia succiniciproducens (strain KCTC 0769BP / MBEL55E).